Reading from the N-terminus, the 152-residue chain is Xanthine-guanine phosphoribosyltransferase (152 aa).

5-phospho-alpha-D-ribose 1-diphosphate is bound by residues 37-38, arginine 69, and 88-96; these read RG and DDLVDTGGT. Position 69 (arginine 69) interacts with GMP. Aspartate 89 is a binding site for Mg(2+). Residues aspartate 92 and isoleucine 135 each contribute to the guanine site. Xanthine contacts are provided by aspartate 92 and isoleucine 135. Residues 92–96 and 134–135 contribute to the GMP site; these read DTGGT and WI.

Belongs to the purine/pyrimidine phosphoribosyltransferase family. XGPT subfamily. As to quaternary structure, homotetramer. Mg(2+) is required as a cofactor.

It localises to the cell inner membrane. It carries out the reaction GMP + diphosphate = guanine + 5-phospho-alpha-D-ribose 1-diphosphate. It catalyses the reaction XMP + diphosphate = xanthine + 5-phospho-alpha-D-ribose 1-diphosphate. The enzyme catalyses IMP + diphosphate = hypoxanthine + 5-phospho-alpha-D-ribose 1-diphosphate. The protein operates within purine metabolism; GMP biosynthesis via salvage pathway; GMP from guanine: step 1/1. It participates in purine metabolism; XMP biosynthesis via salvage pathway; XMP from xanthine: step 1/1. Its function is as follows. Purine salvage pathway enzyme that catalyzes the transfer of the ribosyl-5-phosphate group from 5-phospho-alpha-D-ribose 1-diphosphate (PRPP) to the N9 position of the 6-oxopurines guanine and xanthine to form the corresponding ribonucleotides GMP (guanosine 5'-monophosphate) and XMP (xanthosine 5'-monophosphate), with the release of PPi. To a lesser extent, also acts on hypoxanthine. The protein is Xanthine-guanine phosphoribosyltransferase of Pectobacterium carotovorum subsp. carotovorum (strain PC1).